A 184-amino-acid polypeptide reads, in one-letter code: Large ribosomal subunit protein eL14 (184 aa).

The interval 149–184 (KNAKKVDSTPAAKKRIEKARAARKAKPTAAKEKSKK) is disordered. A compositionally biased stretch (basic residues) spans 160–174 (AKKRIEKARAARKAK).

The protein belongs to the eukaryotic ribosomal protein eL14 family.

This is Large ribosomal subunit protein eL14 from Trypanosoma congolense.